The following is a 613-amino-acid chain: Dihydroxy-acid dehydratase (613 aa).

Aspartate 81 contributes to the Mg(2+) binding site. Cysteine 122 lines the [2Fe-2S] cluster pocket. Mg(2+) contacts are provided by aspartate 123 and lysine 124. An N6-carboxylysine modification is found at lysine 124. Cysteine 193 provides a ligand contact to [2Fe-2S] cluster. Glutamate 489 is a binding site for Mg(2+). Serine 515 functions as the Proton acceptor in the catalytic mechanism.

The protein belongs to the IlvD/Edd family. In terms of assembly, homodimer. [2Fe-2S] cluster is required as a cofactor. Mg(2+) serves as cofactor.

It catalyses the reaction (2R)-2,3-dihydroxy-3-methylbutanoate = 3-methyl-2-oxobutanoate + H2O. The catalysed reaction is (2R,3R)-2,3-dihydroxy-3-methylpentanoate = (S)-3-methyl-2-oxopentanoate + H2O. It functions in the pathway amino-acid biosynthesis; L-isoleucine biosynthesis; L-isoleucine from 2-oxobutanoate: step 3/4. Its pathway is amino-acid biosynthesis; L-valine biosynthesis; L-valine from pyruvate: step 3/4. Functions in the biosynthesis of branched-chain amino acids. Catalyzes the dehydration of (2R,3R)-2,3-dihydroxy-3-methylpentanoate (2,3-dihydroxy-3-methylvalerate) into 2-oxo-3-methylpentanoate (2-oxo-3-methylvalerate) and of (2R)-2,3-dihydroxy-3-methylbutanoate (2,3-dihydroxyisovalerate) into 2-oxo-3-methylbutanoate (2-oxoisovalerate), the penultimate precursor to L-isoleucine and L-valine, respectively. The protein is Dihydroxy-acid dehydratase of Pseudomonas fluorescens (strain ATCC BAA-477 / NRRL B-23932 / Pf-5).